Consider the following 185-residue polypeptide: Ribosome-recycling factor (185 aa).

The protein belongs to the RRF family.

Its subcellular location is the cytoplasm. Functionally, responsible for the release of ribosomes from messenger RNA at the termination of protein biosynthesis. May increase the efficiency of translation by recycling ribosomes from one round of translation to another. The polypeptide is Ribosome-recycling factor (Campylobacter concisus (strain 13826)).